The following is a 70-amino-acid chain: DNA gyrase inhibitor YacG (70 aa).

Zn(2+) contacts are provided by C20, C23, C35, and C39.

This sequence belongs to the DNA gyrase inhibitor YacG family. As to quaternary structure, interacts with GyrB. The cofactor is Zn(2+).

Inhibits all the catalytic activities of DNA gyrase by preventing its interaction with DNA. Acts by binding directly to the C-terminal domain of GyrB, which probably disrupts DNA binding by the gyrase. In Rhizobium etli (strain ATCC 51251 / DSM 11541 / JCM 21823 / NBRC 15573 / CFN 42), this protein is DNA gyrase inhibitor YacG.